The primary structure comprises 187 residues: Large ribosomal subunit protein uL22B (187 aa).

It belongs to the universal ribosomal protein uL22 family. Component of the large ribosomal subunit (LSU). Mature yeast ribosomes consist of a small (40S) and a large (60S) subunit. The 40S small subunit contains 1 molecule of ribosomal RNA (18S rRNA) and at least 33 different proteins. The large 60S subunit contains 3 rRNA molecules (25S, 5.8S and 5S rRNA) and at least 46 different proteins. uL22 is associated with the polypeptide exit tunnel.

It is found in the cytoplasm. In terms of biological role, component of the ribosome, a large ribonucleoprotein complex responsible for the synthesis of proteins in the cell. The small ribosomal subunit (SSU) binds messenger RNAs (mRNAs) and translates the encoded message by selecting cognate aminoacyl-transfer RNA (tRNA) molecules. The large subunit (LSU) contains the ribosomal catalytic site termed the peptidyl transferase center (PTC), which catalyzes the formation of peptide bonds, thereby polymerizing the amino acids delivered by tRNAs into a polypeptide chain. The nascent polypeptides leave the ribosome through a tunnel in the LSU and interact with protein factors that function in enzymatic processing, targeting, and the membrane insertion of nascent chains at the exit of the ribosomal tunnel. The chain is Large ribosomal subunit protein uL22B (rpl1702) from Schizosaccharomyces pombe (strain 972 / ATCC 24843) (Fission yeast).